The chain runs to 371 residues: Solute carrier family 35 member F6 (371 aa).

The signal sequence occupies residues 1 to 18 (MAWTKYQLFLAGLMLVTG). 2 helical membrane-spanning segments follow: residues 48–68 (FLQAVGMFLGEFSCLAAFYLL) and 89–109 (LLFLPPALCDMTGTSLMYVAL). Positions 104 to 160 (LMYVALNMTSASSFQMLRGAVIIFTGLFSVAFLGRRLVLSQWLGILATIAGLVVVGL) constitute an EamA domain. A glycan (N-linked (GlcNAc...) asparagine) is linked at asparagine 110. A run of 7 helical transmembrane segments spans residues 117-137 (FQMLRGAVIIFTGLFSVAFLG), 140-160 (LVLSQWLGILATIAGLVVVGL), 176-196 (VITGDLLIIMAQIIVAIQMVL), 216-236 (GLFGFVILSLLLVPMYYIPAG), 261-281 (LIAVALLGNISSIAFFNFAGI), 295-312 (LDSLRTVVIWALSLALGW), and 317-336 (ALQILGFLILLIGTALYNGL). Positions 352 to 371 (EESEQERLLGGTRTPINDAS) are disordered. A Phosphothreonine modification is found at threonine 365.

The protein belongs to the SLC35F solute transporter family. As to quaternary structure, interacts with SLC25A5. Expressed in pancreatic ductal adenocarcinoma (PDAC) (at protein level). Strongly expressed in prostate and thyroid. Weakly expressed in lung, heart, liver and kidney.

The protein resides in the mitochondrion. The protein localises to the lysosome membrane. Involved in the maintenance of mitochondrial membrane potential in pancreatic ductal adenocarcinoma (PDAC) cells. Promotes pancreatic ductal adenocarcinoma (PDAC) cell growth. May play a role as a nucleotide-sugar transporter. The polypeptide is Solute carrier family 35 member F6 (SLC35F6) (Homo sapiens (Human)).